Here is a 437-residue protein sequence, read N- to C-terminus: UDP-N-acetylmuramoylalanine--D-glutamate ligase (437 aa).

112–118 (GSNGKST) provides a ligand contact to ATP.

It belongs to the MurCDEF family.

It is found in the cytoplasm. The catalysed reaction is UDP-N-acetyl-alpha-D-muramoyl-L-alanine + D-glutamate + ATP = UDP-N-acetyl-alpha-D-muramoyl-L-alanyl-D-glutamate + ADP + phosphate + H(+). The protein operates within cell wall biogenesis; peptidoglycan biosynthesis. Functionally, cell wall formation. Catalyzes the addition of glutamate to the nucleotide precursor UDP-N-acetylmuramoyl-L-alanine (UMA). The chain is UDP-N-acetylmuramoylalanine--D-glutamate ligase from Haemophilus influenzae (strain PittEE).